We begin with the raw amino-acid sequence, 153 residues long: Insulin-like growth factor 1 (153 aa).

Positions 49–77 are b; the sequence is GPETLCGAELVDALQFVCGPRGFYFNKPT. 3 cysteine pairs are disulfide-bonded: cysteine 54–cysteine 96, cysteine 66–cysteine 109, and cysteine 95–cysteine 100. The segment at 78 to 89 is c; that stretch reads GYGSSIRRAPQT. Positions 90–110 are a; sequence GIVDECCFRSCDLRRLEMYCA. The d stretch occupies residues 111–118; that stretch reads PLKPTKAA. A propeptide spans 119–153 (e peptide); the sequence is RSIRAQRHTDMPKTQKEVHLKNTSRGSAGNKTYRM. The tract at residues 120–153 is disordered; that stretch reads SIRAQRHTDMPKTQKEVHLKNTSRGSAGNKTYRM. A compositionally biased stretch (basic and acidic residues) spans 125–138; sequence RHTDMPKTQKEVHL. The segment covering 139–153 has biased composition (polar residues); it reads KNTSRGSAGNKTYRM.

The protein belongs to the insulin family. As to quaternary structure, forms a ternary complex with IGFR1 and ITGAV:ITGB3. Forms a ternary complex with IGFR1 and ITGA6:ITGB4. Interacts with SH2D3C isoform 2. Forms a ternary complex with IGFBP3 and ALS.

The protein resides in the secreted. In terms of biological role, the insulin-like growth factors, isolated from plasma, are structurally and functionally related to insulin but have a much higher growth-promoting activity. May be a physiological regulator of [1-14C]-2-deoxy-D-glucose (2DG) transport and glycogen synthesis in osteoblasts. Stimulates glucose transport in bone-derived osteoblastic (PyMS) cells and is effective at much lower concentrations than insulin, not only regarding glycogen and DNA synthesis but also with regard to enhancing glucose uptake. May play a role in synapse maturation. Ca(2+)-dependent exocytosis of IGF1 is required for sensory perception of smell in the olfactory bulb. Acts as a ligand for IGF1R. Binds to the alpha subunit of IGF1R, leading to the activation of the intrinsic tyrosine kinase activity which autophosphorylates tyrosine residues in the beta subunit thus initiating a cascade of down-stream signaling events leading to activation of the PI3K-AKT/PKB and the Ras-MAPK pathways. Binds to integrins ITGAV:ITGB3 and ITGA6:ITGB4. Its binding to integrins and subsequent ternary complex formation with integrins and IGFR1 are essential for IGF1 signaling. Induces the phosphorylation and activation of IGFR1, MAPK3/ERK1, MAPK1/ERK2 and AKT1. As part of the MAPK/ERK signaling pathway, acts as a negative regulator of apoptosis in cardiomyocytes via promotion of STUB1/CHIP-mediated ubiquitination and degradation of ICER-type isoforms of CREM. The polypeptide is Insulin-like growth factor 1 (Mus musculus (Mouse)).